The sequence spans 73 residues: Putative membrane protein insertion efficiency factor (73 aa).

Belongs to the UPF0161 family.

It localises to the cell inner membrane. Its function is as follows. Could be involved in insertion of integral membrane proteins into the membrane. This chain is Putative membrane protein insertion efficiency factor, found in Phocaeicola vulgatus (strain ATCC 8482 / DSM 1447 / JCM 5826 / CCUG 4940 / NBRC 14291 / NCTC 11154) (Bacteroides vulgatus).